The primary structure comprises 290 residues: 33 kDa chaperonin (290 aa).

2 disulfide bridges follow: cysteine 236-cysteine 238 and cysteine 269-cysteine 272.

Belongs to the HSP33 family. In terms of processing, under oxidizing conditions two disulfide bonds are formed involving the reactive cysteines. Under reducing conditions zinc is bound to the reactive cysteines and the protein is inactive.

It is found in the cytoplasm. Functionally, redox regulated molecular chaperone. Protects both thermally unfolding and oxidatively damaged proteins from irreversible aggregation. Plays an important role in the bacterial defense system toward oxidative stress. The protein is 33 kDa chaperonin of Acholeplasma laidlawii (strain PG-8A).